A 316-amino-acid chain; its full sequence is Thymidylate synthase (316 aa).

DUMP is bound by residues Arg-23 and 178–179; that span reads RR. The Nucleophile role is filled by Cys-198. DUMP contacts are provided by residues 218–221, Asn-229, and 259–261; these read RSGD and HIY. Asp-221 is a binding site for (6R)-5,10-methylene-5,6,7,8-tetrahydrofolate. Ala-315 is a (6R)-5,10-methylene-5,6,7,8-tetrahydrofolate binding site.

Belongs to the thymidylate synthase family. Bacterial-type ThyA subfamily. In terms of assembly, homodimer.

The protein resides in the cytoplasm. It catalyses the reaction dUMP + (6R)-5,10-methylene-5,6,7,8-tetrahydrofolate = 7,8-dihydrofolate + dTMP. It participates in pyrimidine metabolism; dTTP biosynthesis. Its function is as follows. Catalyzes the reductive methylation of 2'-deoxyuridine-5'-monophosphate (dUMP) to 2'-deoxythymidine-5'-monophosphate (dTMP) while utilizing 5,10-methylenetetrahydrofolate (mTHF) as the methyl donor and reductant in the reaction, yielding dihydrofolate (DHF) as a by-product. This enzymatic reaction provides an intracellular de novo source of dTMP, an essential precursor for DNA biosynthesis. The polypeptide is Thymidylate synthase (Pediococcus pentosaceus (strain ATCC 25745 / CCUG 21536 / LMG 10740 / 183-1w)).